We begin with the raw amino-acid sequence, 625 residues long: 1-deoxy-D-xylulose-5-phosphate synthase (625 aa).

Thiamine diphosphate-binding positions include His-80 and 121-123; that span reads GHS. Asp-152 lines the Mg(2+) pocket. Thiamine diphosphate is bound by residues 153–154, Asn-181, Tyr-290, and Glu-371; that span reads GS. Residue Asn-181 participates in Mg(2+) binding.

This sequence belongs to the transketolase family. DXPS subfamily. As to quaternary structure, homodimer. It depends on Mg(2+) as a cofactor. Thiamine diphosphate is required as a cofactor.

It catalyses the reaction D-glyceraldehyde 3-phosphate + pyruvate + H(+) = 1-deoxy-D-xylulose 5-phosphate + CO2. Its pathway is metabolic intermediate biosynthesis; 1-deoxy-D-xylulose 5-phosphate biosynthesis; 1-deoxy-D-xylulose 5-phosphate from D-glyceraldehyde 3-phosphate and pyruvate: step 1/1. In terms of biological role, catalyzes the acyloin condensation reaction between C atoms 2 and 3 of pyruvate and glyceraldehyde 3-phosphate to yield 1-deoxy-D-xylulose-5-phosphate (DXP). The polypeptide is 1-deoxy-D-xylulose-5-phosphate synthase (Haemophilus influenzae (strain PittGG)).